The primary structure comprises 427 residues: MFVDKVKVYVKGGDGGNGMVAFRREKYVPDGGPAGGDGGKGGSVIFKVDEGLRTLMDFRYQRHFKADRGEHGRPKNQHGKNAEDKIVRVPPGTTVIDEQTGQVLADLTHHGQEAIIAKGGRGGRGNTRFATPANPAPELSENGEPGVERDVILELKVLADAGLVGFPSVGKSTLLSVVSSAKPKIAEYHFTTITPNLGVVRVDDGRSFVLADLPGLIEGAHEGIGLGHQFLRHIERTRVIVHVIDMSALEGRDPYDDYVSINEELKAYNLRLMERPQLIVANKMDMPNAAENLERFKEKLTDDHPIFPISALTRDGLQPLLRAIMDTIETTPEFPIYEETETESRVLYKHDKEQDPFVISRADDGAYVLSGAEIEKLFKMTDFSRDESVRRFSRQLRHMGVDEALRQRGAKDGDLVRLLEFEFEFIE.

In terms of domain architecture, Obg spans M1–L158. Residues K118 to E144 are disordered. An OBG-type G domain is found at A159–E329. Residues G165–S172, F190–T194, D212–G215, N282–D285, and S310–L312 contribute to the GTP site. 2 residues coordinate Mg(2+): S172 and T192. The OCT domain occupies K349–E427.

The protein belongs to the TRAFAC class OBG-HflX-like GTPase superfamily. OBG GTPase family. In terms of assembly, monomer. The cofactor is Mg(2+).

The protein localises to the cytoplasm. Its function is as follows. An essential GTPase which binds GTP, GDP and possibly (p)ppGpp with moderate affinity, with high nucleotide exchange rates and a fairly low GTP hydrolysis rate. Plays a role in control of the cell cycle, stress response, ribosome biogenesis and in those bacteria that undergo differentiation, in morphogenesis control. This chain is GTPase Obg, found in Halalkalibacterium halodurans (strain ATCC BAA-125 / DSM 18197 / FERM 7344 / JCM 9153 / C-125) (Bacillus halodurans).